Here is a 376-residue protein sequence, read N- to C-terminus: Carbamoyl phosphate synthase small chain (376 aa).

The interval 1-183 (MENILLNKAL…IYKKKYIEKN (183 aa)) is CPSase. L-glutamine contacts are provided by Ser-51, Gly-235, and Gly-237. One can recognise a Glutamine amidotransferase type-1 domain in the interval 187 to 374 (NIVAYDFGIK…INLVKDYRLN (188 aa)). Cys-263 (nucleophile) is an active-site residue. Residues Leu-264, Gln-267, Asn-305, and Phe-308 each coordinate L-glutamine. Catalysis depends on residues His-347 and Glu-349.

This sequence belongs to the CarA family. Composed of two chains; the small (or glutamine) chain promotes the hydrolysis of glutamine to ammonia, which is used by the large (or ammonia) chain to synthesize carbamoyl phosphate. Tetramer of heterodimers (alpha,beta)4.

It carries out the reaction hydrogencarbonate + L-glutamine + 2 ATP + H2O = carbamoyl phosphate + L-glutamate + 2 ADP + phosphate + 2 H(+). The enzyme catalyses L-glutamine + H2O = L-glutamate + NH4(+). Its pathway is amino-acid biosynthesis; L-arginine biosynthesis; carbamoyl phosphate from bicarbonate: step 1/1. It functions in the pathway pyrimidine metabolism; UMP biosynthesis via de novo pathway; (S)-dihydroorotate from bicarbonate: step 1/3. In terms of biological role, small subunit of the glutamine-dependent carbamoyl phosphate synthetase (CPSase). CPSase catalyzes the formation of carbamoyl phosphate from the ammonia moiety of glutamine, carbonate, and phosphate donated by ATP, constituting the first step of 2 biosynthetic pathways, one leading to arginine and/or urea and the other to pyrimidine nucleotides. The small subunit (glutamine amidotransferase) binds and cleaves glutamine to supply the large subunit with the substrate ammonia. This is Carbamoyl phosphate synthase small chain from Wigglesworthia glossinidia brevipalpis.